The sequence spans 225 residues: uncharacterized protein (225 aa).

In terms of domain architecture, PCI spans 166-214 (LNSDVIKDKILAIIENVGEITYEELAEKINIPEEDLEKYLSELKESGDI).

This is an uncharacterized protein from Methanocaldococcus jannaschii (strain ATCC 43067 / DSM 2661 / JAL-1 / JCM 10045 / NBRC 100440) (Methanococcus jannaschii).